The sequence spans 247 residues: Cell division protein ZapD (247 aa).

This sequence belongs to the ZapD family. As to quaternary structure, interacts with FtsZ.

It localises to the cytoplasm. In terms of biological role, cell division factor that enhances FtsZ-ring assembly. Directly interacts with FtsZ and promotes bundling of FtsZ protofilaments, with a reduction in FtsZ GTPase activity. The sequence is that of Cell division protein ZapD from Escherichia coli O17:K52:H18 (strain UMN026 / ExPEC).